Here is a 354-residue protein sequence, read N- to C-terminus: tRNA dimethylallyltransferase (354 aa).

ATP is bound at residue 28–35 (GPTATGKS). A substrate-binding site is contributed by 30-35 (TATGKS). The interval 53-56 (DSRQ) is interaction with substrate tRNA.

Belongs to the IPP transferase family. Monomer. Mg(2+) serves as cofactor.

It catalyses the reaction adenosine(37) in tRNA + dimethylallyl diphosphate = N(6)-dimethylallyladenosine(37) in tRNA + diphosphate. In terms of biological role, catalyzes the transfer of a dimethylallyl group onto the adenine at position 37 in tRNAs that read codons beginning with uridine, leading to the formation of N6-(dimethylallyl)adenosine (i(6)A). The protein is tRNA dimethylallyltransferase of Synechococcus sp. (strain JA-2-3B'a(2-13)) (Cyanobacteria bacterium Yellowstone B-Prime).